We begin with the raw amino-acid sequence, 82 residues long: Small ribosomal subunit protein bS16 (82 aa).

Belongs to the bacterial ribosomal protein bS16 family.

The chain is Small ribosomal subunit protein bS16 from Desulfosudis oleivorans (strain DSM 6200 / JCM 39069 / Hxd3) (Desulfococcus oleovorans).